A 314-amino-acid polypeptide reads, in one-letter code: Coproporphyrin III ferrochelatase (314 aa).

2 residues coordinate Fe(2+): His186 and Glu268.

The protein belongs to the ferrochelatase family.

The protein localises to the cytoplasm. It carries out the reaction Fe-coproporphyrin III + 2 H(+) = coproporphyrin III + Fe(2+). Its pathway is porphyrin-containing compound metabolism; protoheme biosynthesis. Its function is as follows. Involved in coproporphyrin-dependent heme b biosynthesis. Catalyzes the insertion of ferrous iron into coproporphyrin III to form Fe-coproporphyrin III. In Lactococcus lactis subsp. lactis (strain IL1403) (Streptococcus lactis), this protein is Coproporphyrin III ferrochelatase.